Consider the following 230-residue polypeptide: Prolactin-6A1 (230 aa).

An N-terminal signal peptide occupies residues 1–29; the sequence is MLSLSQPCFSGTLLMLLASNFLLWKNVAP. An N-linked (GlcNAc...) asparagine glycan is attached at N57. Disulfide bonds link C89–C205 and C222–C230.

Belongs to the somatotropin/prolactin family. Expressed in both placenta and decidual tissues. Detected first in deciduals cells early in gestation and in trophoblasts later in pregnancy.

It is found in the secreted. In Mus musculus (Mouse), this protein is Prolactin-6A1 (Prl6a1).